The primary structure comprises 908 residues: Translation initiation factor IF-2 (908 aa).

The segment at 52 to 318 (QSHGQEEKRR…RSSQSSQHKF (267 aa)) is disordered. Positions 65–84 (KSKTTSTARVTGSSGKSKSV) are enriched in polar residues. Basic and acidic residues-rich tracts occupy residues 94–108 (FEKPDPEKMAEELAA), 120–138 (AAKDAEDRAATKKKSEERQ), 176–185 (IEVKPKDQPK), 193–238 (PKVE…EQMR), 270–280 (SFEKERREIKR), and 294–303 (KNQDEREIKN). The tr-type G domain occupies 409 to 578 (TRPPVVTIMG…SLQAELMELE (170 aa)). Residues 418 to 425 (GHVDHGKT) are G1. Position 418-425 (418-425 (GHVDHGKT)) interacts with GTP. A G2 region spans residues 443–447 (GITQH). The interval 464–467 (DTPG) is G3. Residues 464-468 (DTPGH) and 518-521 (NKMD) contribute to the GTP site. The interval 518 to 521 (NKMD) is G4. A G5 region spans residues 554-556 (SAK).

It belongs to the TRAFAC class translation factor GTPase superfamily. Classic translation factor GTPase family. IF-2 subfamily.

The protein resides in the cytoplasm. Functionally, one of the essential components for the initiation of protein synthesis. Protects formylmethionyl-tRNA from spontaneous hydrolysis and promotes its binding to the 30S ribosomal subunits. Also involved in the hydrolysis of GTP during the formation of the 70S ribosomal complex. The chain is Translation initiation factor IF-2 from Psychrobacter cryohalolentis (strain ATCC BAA-1226 / DSM 17306 / VKM B-2378 / K5).